A 184-amino-acid polypeptide reads, in one-letter code: Photosystem I assembly protein Ycf4 (184 aa).

2 consecutive transmembrane segments (helical) span residues 20 to 40 and 64 to 84; these read GNFF…VVGI and IVMS…WCTI.

Belongs to the Ycf4 family.

The protein resides in the plastid. It localises to the chloroplast thylakoid membrane. Seems to be required for the assembly of the photosystem I complex. The sequence is that of Photosystem I assembly protein Ycf4 from Citrus sinensis (Sweet orange).